Reading from the N-terminus, the 356-residue chain is GATA zinc finger domain-containing protein 17 (356 aa).

Positions Leu91–Leu119 form a coiled coil. The span at Thr158 to Leu188 shows a compositional bias: low complexity. The tract at residues Thr158–Glu294 is disordered. Positions Ser206 to Val228 are enriched in acidic residues. A compositionally biased stretch (low complexity) spans Thr260 to Asp284. Residues Cys304–Cys331 form a GATA-type zinc finger.

This is GATA zinc finger domain-containing protein 17 (gtaQ) from Dictyostelium discoideum (Social amoeba).